A 192-amino-acid polypeptide reads, in one-letter code: Ion-translocating oxidoreductase complex subunit A (192 aa).

A run of 6 helical transmembrane segments spans residues 5–25 (LLLL…FLGL), 39–59 (IGMS…SYLV), 65–85 (LPFD…AVVV), 102–122 (ALGI…VALL), 134–154 (AIYG…FSAM), and 171–191 (AIAM…TGLV).

It belongs to the NqrDE/RnfAE family. As to quaternary structure, the complex is composed of six subunits: RnfA, RnfB, RnfC, RnfD, RnfE and RnfG.

It localises to the cell inner membrane. Its function is as follows. Part of a membrane-bound complex that couples electron transfer with translocation of ions across the membrane. This chain is Ion-translocating oxidoreductase complex subunit A, found in Shewanella sp. (strain MR-4).